The following is a 197-amino-acid chain: Imidazoleglycerol-phosphate dehydratase (197 aa).

It belongs to the imidazoleglycerol-phosphate dehydratase family.

It localises to the cytoplasm. The enzyme catalyses D-erythro-1-(imidazol-4-yl)glycerol 3-phosphate = 3-(imidazol-4-yl)-2-oxopropyl phosphate + H2O. The protein operates within amino-acid biosynthesis; L-histidine biosynthesis; L-histidine from 5-phospho-alpha-D-ribose 1-diphosphate: step 6/9. The sequence is that of Imidazoleglycerol-phosphate dehydratase from Halorhodospira halophila (strain DSM 244 / SL1) (Ectothiorhodospira halophila (strain DSM 244 / SL1)).